We begin with the raw amino-acid sequence, 207 residues long: Putative 3-methyladenine DNA glycosylase (207 aa).

This sequence belongs to the DNA glycosylase MPG family.

The chain is Putative 3-methyladenine DNA glycosylase from Listeria monocytogenes serotype 4a (strain HCC23).